Here is a 391-residue protein sequence, read N- to C-terminus: 3-ketoacyl-CoA thiolase (391 aa).

Cysteine 95 (acyl-thioester intermediate) is an active-site residue. Residues histidine 347 and cysteine 377 each act as proton acceptor in the active site.

This sequence belongs to the thiolase-like superfamily. Thiolase family. Heterotetramer of two alpha chains (FadB) and two beta chains (FadA).

The protein localises to the cytoplasm. It catalyses the reaction an acyl-CoA + acetyl-CoA = a 3-oxoacyl-CoA + CoA. The protein operates within lipid metabolism; fatty acid beta-oxidation. Its function is as follows. Catalyzes the final step of fatty acid oxidation in which acetyl-CoA is released and the CoA ester of a fatty acid two carbons shorter is formed. The sequence is that of 3-ketoacyl-CoA thiolase from Saccharophagus degradans (strain 2-40 / ATCC 43961 / DSM 17024).